Here is a 748-residue protein sequence, read N- to C-terminus: MTISSFLRVRHSLAAAKCVLENAKQSFSSHAAFAEHAKLERIRNIGISAHIDSGKTTLTERILFYTGRIKQMHEVKGKDNVGATMDSMELERQRGITIQSAATYTMWKDHNINIIDTPGHVDFTVEVERALRVLDGAILVLCSVGGVQSQTLTVNRQMKRYNVPCLAFINKLDRTGANPYRVLGQMRSKLNHNAAFIQLPIGVESNCKGIVDLVKQRALYFEDHLGLTVREDEIPQEMRAESDERRHELIEHLSNVDESIGELFLEEKTPTEQDIMAAIRRSALKRTFTPVLVGTALKNKGVQPLLDAVLNYLPHPGEVENIALIEKKGKEPQQIMLDPARDGKSPFVGLAFKLEAGRFGQLTYLRCYQGVLRKGDSIFNVRSGKKVRLARLVRLHSNNMEDVNEVYAGDIFALFGVDCASGDTFVTNPDLELSMESIFVPDPVVSMAIKPANNKDRDNFSKAVARFTKEDPTFRFAYDTDIKETLVSGMGELHLEIYAQRMEREYNCPVILGKPKVAFRETLVAPCEFDFLHKKQSGGQGQYARVTGVLEPLPPHQNTTIEFTDETVGTNVPKQFVPGIEKGFRQMAEKGLLSGHKLSGIKFRLQDGAHHIVDSSELAFMLAAQGAIKSVFENGSWQILEPIMMVEVTAPEEFQGTVIGQLNKRHGIITGTEGSEGWFTVYAEVPLNDMFGYAGELRSSTQGKGEFSMEYSRYSPCKPDVQEKLMQDYQIAQGNVVVDAKKQQKKKN.

The transit peptide at 1 to 14 directs the protein to the mitochondrion; it reads MTISSFLRVRHSLA. The 279-residue stretch at 40 to 318 folds into the tr-type G domain; sequence ERIRNIGISA…VLNYLPHPGE (279 aa). Residues 49-56, 116-120, and 170-173 contribute to the GTP site; these read AHIDSGKT, DTPGH, and NKLD.

The protein belongs to the TRAFAC class translation factor GTPase superfamily. Classic translation factor GTPase family. EF-G/EF-2 subfamily.

It localises to the mitochondrion. It participates in protein biosynthesis; polypeptide chain elongation. Its function is as follows. Mitochondrial GTPase that catalyzes the GTP-dependent ribosomal translocation step during translation elongation. During this step, the ribosome changes from the pre-translocational (PRE) to the post-translocational (POST) state as the newly formed A-site-bound peptidyl-tRNA and P-site-bound deacylated tRNA move to the P and E sites, respectively. Catalyzes the coordinated movement of the two tRNA molecules, the mRNA and conformational changes in the ribosome. The sequence is that of Elongation factor G, mitochondrial from Aedes aegypti (Yellowfever mosquito).